We begin with the raw amino-acid sequence, 132 residues long: Small ribosomal subunit protein uS8 (132 aa).

It belongs to the universal ribosomal protein uS8 family. In terms of assembly, part of the 30S ribosomal subunit. Contacts proteins S5 and S12.

One of the primary rRNA binding proteins, it binds directly to 16S rRNA central domain where it helps coordinate assembly of the platform of the 30S subunit. The sequence is that of Small ribosomal subunit protein uS8 from Rhodospirillum centenum (strain ATCC 51521 / SW).